The sequence spans 84 residues: Anthracycline acyl carrier protein DauA (84 aa).

The 78-residue stretch at 3–80 folds into the Carrier domain; that stretch reads ELSLAELREI…SMLIFVNERL (78 aa). An O-(pantetheine 4'-phosphoryl)serine modification is found at S40.

Its pathway is antibiotic biosynthesis; daunorubicin biosynthesis. The protein operates within antibiotic biosynthesis; carminomycin biosynthesis. It functions in the pathway antibiotic biosynthesis; rhodomycin biosynthesis. It participates in antibiotic biosynthesis; aclacinomycin biosynthesis. Involved in the biosynthesis of aklanonate which is an important precursor common to the formation of the clinically significant anthracyclines such as carminomycin, daunorubicin (daunomycin), rhodomycin, aclacinomycin T (aklavin) and aclacinomycin A (aclarubicin). These compounds are aromatic polyketide antibiotics that exhibit high cytotoxicity and are widely applied in the chemotherapy of a variety of cancers. The chain is Anthracycline acyl carrier protein DauA (dauA) from Streptomyces sp. (strain C5).